The following is a 1133-amino-acid chain: Myb-binding protein 1A (1133 aa).

4 disordered regions span residues 1–62 (MKSK…ENTA), 718–764 (PLSK…DAES), 924–943 (GEEH…SRQA), and 1111–1133 (KKVA…EEST). Composition is skewed to basic and acidic residues over residues 20-35 (KAKE…KSEA) and 50-60 (EKPAETEEKEN). Acidic residues-rich tracts occupy residues 725–735 (GEEESDDELDK) and 744–762 (DDSE…EDDA).

This sequence belongs to the MYBBP1A family. Interacts with nclb.

It localises to the cytoplasm. Its subcellular location is the nucleus. It is found in the nucleolus. Has a role in rRNA biogenesis, cell proliferation and tissue growth by contributing to the localization of nclb to the nucleolus. This chain is Myb-binding protein 1A, found in Drosophila melanogaster (Fruit fly).